Consider the following 216-residue polypeptide: MSCTIEKVLADAKALVERLREHDGAAEVLIEQTTTLNKRVEAMKQYQEEVQELNEIARHRPRSTLVLGIQQENRQIRQLQQENKELRTSLKEHQSALELIMSKYREQMFRLLMASKKDDPGIIMKLKEQHSKELQAHIEKITEMTAVMKRAIEIDEQQGNQEHDRIVKLEQENKWLRKTLQITRASFLNLHKEDAAESSSHSASSVPNTDLSLRKS.

Coiled coils occupy residues 33–102 (TTTL…LIMS) and 131–185 (SKEL…ITRA). A disordered region spans residues 193–216 (EDAAESSSHSASSVPNTDLSLRKS). Over residues 206–216 (VPNTDLSLRKS) the composition is skewed to polar residues.

This sequence belongs to the SIKE family.

It is found in the cytoplasm. This chain is FGFR1 oncogene partner 2 homolog (fgfr1op2), found in Xenopus tropicalis (Western clawed frog).